The primary structure comprises 326 residues: Transposase for insertion sequence element IS4351 (326 aa).

In terms of domain architecture, Integrase catalytic spans 156–317 (IDERPEIVEL…TPNEKFKQII (162 aa)).

The protein belongs to the transposase IS30 family.

Functionally, required for the transposition of the insertion element. This chain is Transposase for insertion sequence element IS4351, found in Bacteroides fragilis.